We begin with the raw amino-acid sequence, 58 residues long: U11-ctenitoxin-Pn1b (58 aa).

5 disulfide bridges follow: Cys-2-Cys-16, Cys-9-Cys-22, Cys-15-Cys-40, Cys-24-Cys-38, and Cys-48-Cys-55.

In terms of tissue distribution, expressed by the venom gland.

It localises to the secreted. Functionally, non-toxic to mice. This is U11-ctenitoxin-Pn1b from Phoneutria nigriventer (Brazilian armed spider).